A 466-amino-acid chain; its full sequence is Uronate isomerase (466 aa).

This sequence belongs to the metallo-dependent hydrolases superfamily. Uronate isomerase family.

It carries out the reaction D-glucuronate = D-fructuronate. The enzyme catalyses aldehydo-D-galacturonate = keto-D-tagaturonate. The protein operates within carbohydrate metabolism; pentose and glucuronate interconversion. This Caldanaerobacter subterraneus subsp. tengcongensis (strain DSM 15242 / JCM 11007 / NBRC 100824 / MB4) (Thermoanaerobacter tengcongensis) protein is Uronate isomerase.